A 61-amino-acid chain; its full sequence is Large ribosomal subunit protein uL29 (61 aa).

It belongs to the universal ribosomal protein uL29 family.

In Xanthomonas campestris pv. campestris (strain 8004), this protein is Large ribosomal subunit protein uL29.